The primary structure comprises 100 residues: Urease subunit gamma (100 aa).

This sequence belongs to the urease gamma subunit family. As to quaternary structure, heterotrimer of UreA (gamma), UreB (beta) and UreC (alpha) subunits. Three heterotrimers associate to form the active enzyme.

The protein resides in the cytoplasm. It catalyses the reaction urea + 2 H2O + H(+) = hydrogencarbonate + 2 NH4(+). It participates in nitrogen metabolism; urea degradation; CO(2) and NH(3) from urea (urease route): step 1/1. The polypeptide is Urease subunit gamma (Prochlorococcus marinus (strain NATL1A)).